The chain runs to 111 residues: WAP four-disulfide core domain protein 12 (111 aa).

The signal sequence occupies residues 1–23 (MGSSSFLVLMVSLTLVTLVAVEG). One can recognise a WAP domain in the interval 27–74 (DIEKAGVCPADNVRCFKSDPPQCHTDQDCLGERKCCYLHCGFKCVIPV). 4 disulfide bridges follow: C34-C62, C41-C66, C49-C61, and C55-C70. A disordered region spans residues 80–111 (GGNKDEDVSRPYPEPGWEAKCPGSSSTRCPQK). Positions 102–111 (GSSSTRCPQK) are enriched in polar residues.

It localises to the secreted. Functionally, antibacterial protein. Putative acid-stable proteinase inhibitor. In Pan troglodytes (Chimpanzee), this protein is WAP four-disulfide core domain protein 12 (WFDC12).